Here is an 87-residue protein sequence, read N- to C-terminus: Small ribosomal subunit protein bS20 (87 aa).

This sequence belongs to the bacterial ribosomal protein bS20 family.

Functionally, binds directly to 16S ribosomal RNA. This Rhizorhabdus wittichii (strain DSM 6014 / CCUG 31198 / JCM 15750 / NBRC 105917 / EY 4224 / RW1) (Sphingomonas wittichii) protein is Small ribosomal subunit protein bS20.